The primary structure comprises 586 residues: Dual specificity tyrosine-phosphorylation-regulated kinase 3 (586 aa).

The span at Met1–Ala13 shows a compositional bias: basic and acidic residues. The segment at Met1–Gly187 is disordered. One can recognise a Protein kinase domain in the interval Tyr208 to Ile521. ATP is bound by residues Ile214–Val222, Lys237, and Phe287–Leu290. Asp334 (proton acceptor) is an active-site residue. At Tyr368 the chain carries Phosphotyrosine. The short motif at Arg467 to Lys480 is the Nuclear localization signal element.

The protein belongs to the protein kinase superfamily. CMGC Ser/Thr protein kinase family. MNB/DYRK subfamily. Interacts with SIRT1. Requires Mg(2+) as cofactor. In terms of processing, ubiquitinated at anaphase by the anaphase-promoting complex (APC/C), leading to its degradation by the proteasome. Protein kinase activity is activated following autophosphorylation at Tyr-368.

Its subcellular location is the nucleus. The protein resides in the cytoplasm. The protein localises to the nucleus speckle. It localises to the cytoplasmic granule. It is found in the cytoskeleton. Its subcellular location is the microtubule organizing center. The protein resides in the centrosome. The enzyme catalyses L-seryl-[protein] + ATP = O-phospho-L-seryl-[protein] + ADP + H(+). It catalyses the reaction L-threonyl-[protein] + ATP = O-phospho-L-threonyl-[protein] + ADP + H(+). The catalysed reaction is L-tyrosyl-[protein] + ATP = O-phospho-L-tyrosyl-[protein] + ADP + H(+). With respect to regulation, protein kinase activity is activated following autophosphorylation at Tyr-368. In terms of biological role, dual-specificity protein kinase that promotes disassembly of several types of membraneless organelles during mitosis, such as stress granules, nuclear speckles and pericentriolar material. Dual-specificity tyrosine-regulated kinases (DYRKs) autophosphorylate a critical tyrosine residue in their activation loop and phosphorylate their substrate on serine and threonine residues. Acts as a central dissolvase of membraneless organelles during the G2-to-M transition, after the nuclear-envelope breakdown: acts by mediating phosphorylation of multiple serine and threonine residues in unstructured domains of proteins, such as SRRM1 and PCM1. Does not mediate disassembly of all membraneless organelles: disassembly of P-body and nucleolus is not regulated by DYRK3. Dissolution of membraneless organelles at the onset of mitosis is also required to release mitotic regulators, such as ZNF207, from liquid-unmixed organelles where they are sequestered and keep them dissolved during mitosis. Regulates mTORC1 by mediating the dissolution of stress granules: during stressful conditions, DYRK3 partitions from the cytosol to the stress granule, together with mTORC1 components, which prevents mTORC1 signaling. When stress signals are gone, the kinase activity of DYRK3 is required for the dissolution of stress granule and mTORC1 relocation to the cytosol: acts by mediating the phosphorylation of the mTORC1 inhibitor AKT1S1, allowing full reactivation of mTORC1 signaling. Also acts as a negative regulator of EPO-dependent erythropoiesis: may place an upper limit on red cell production during stress erythropoiesis. Inhibits cell death due to cytokine withdrawal in hematopoietic progenitor cells. Promotes cell survival upon genotoxic stress through phosphorylation of SIRT1: this in turn inhibits p53/TP53 activity and apoptosis. The polypeptide is Dual specificity tyrosine-phosphorylation-regulated kinase 3 (Mus musculus (Mouse)).